Reading from the N-terminus, the 393-residue chain is Sedoheptulose-1,7-bisphosphatase, chloroplastic (393 aa).

A disulfide bond links Cys-115 and Cys-120. Residues Asp-126, Glu-155, Asp-176, Leu-178, and Asp-179 each contribute to the Mg(2+) site. Residues Asp-179–Ser-182, Tyr-290, and Lys-320 contribute to the substrate site. Glu-326 contributes to the Mg(2+) binding site.

Belongs to the FBPase class 1 family. Homodimer. Mg(2+) is required as a cofactor.

Its subcellular location is the plastid. The protein localises to the chloroplast. It catalyses the reaction D-sedoheptulose 1,7-bisphosphate + H2O = D-sedoheptulose 7-phosphate + phosphate. It participates in carbohydrate biosynthesis; Calvin cycle. In Triticum aestivum (Wheat), this protein is Sedoheptulose-1,7-bisphosphatase, chloroplastic.